The following is a 40-amino-acid chain: Photosystem II reaction center protein J (40 aa).

The chain crosses the membrane as a helical span at residues 8–28 (IPLWIIGTVAGIPVIGLIGIF).

The protein belongs to the PsbJ family. As to quaternary structure, PSII is composed of 1 copy each of membrane proteins PsbA, PsbB, PsbC, PsbD, PsbE, PsbF, PsbH, PsbI, PsbJ, PsbK, PsbL, PsbM, PsbT, PsbX, PsbY, PsbZ, Psb30/Ycf12, at least 3 peripheral proteins of the oxygen-evolving complex and a large number of cofactors. It forms dimeric complexes.

Its subcellular location is the plastid. It is found in the chloroplast thylakoid membrane. One of the components of the core complex of photosystem II (PSII). PSII is a light-driven water:plastoquinone oxidoreductase that uses light energy to abstract electrons from H(2)O, generating O(2) and a proton gradient subsequently used for ATP formation. It consists of a core antenna complex that captures photons, and an electron transfer chain that converts photonic excitation into a charge separation. This is Photosystem II reaction center protein J from Pelargonium hortorum (Common geranium).